The following is a 66-amino-acid chain: Toxin NaTx-4 (66 aa).

An LCN-type CS-alpha/beta domain is found at 1 to 64 (KEGYLVNKET…TFPIPGKTCS (64 aa)). Cystine bridges form between Cys-12/Cys-63, Cys-16/Cys-39, Cys-25/Cys-44, and Cys-29/Cys-46.

Belongs to the long (4 C-C) scorpion toxin superfamily. Sodium channel inhibitor family. In terms of tissue distribution, expressed by the venom gland.

It localises to the secreted. Its function is as follows. Probable sodium channel inhibitor. This is Toxin NaTx-4 from Centruroides sculpturatus (Arizona bark scorpion).